A 135-amino-acid polypeptide reads, in one-letter code: Galectin-1 (135 aa).

An N-acetylalanine modification is found at A2. The Galectin domain maps to 4-135 (GLVASNLNLK…DFKIKCVAFE (132 aa)). Residues K13 and K29 each carry the N6-acetyllysine modification. Residue S30 is modified to Phosphoserine. A beta-D-galactoside contacts are provided by residues 45 to 49 (HFNPR), H53, N62, and 69 to 72 (WGAE). An N6-acetyllysine; alternate modification is found at K108. K108 carries the post-translational modification N6-succinyllysine; alternate. K128 carries the N6-acetyllysine modification.

As to quaternary structure, homodimer. Binds LGALS3BP. Interacts with CD2, CD3, CD4, CD6, CD7, CD43, ALCAM and CD45. Interacts with laminin (via poly-N-acetyllactosamine). Interacts with SUSD2. Interacts with cargo receptor TMED10; the interaction mediates the translocation from the cytoplasm into the ERGIC (endoplasmic reticulum-Golgi intermediate compartment) and thereby secretion.

Its subcellular location is the secreted. The protein localises to the extracellular space. It is found in the extracellular matrix. The protein resides in the cytoplasm. In terms of biological role, lectin that binds beta-galactoside and a wide array of complex carbohydrates. Plays a role in regulating apoptosis, cell proliferation and cell differentiation. Inhibits CD45 protein phosphatase activity and therefore the dephosphorylation of Lyn kinase. Strong inducer of T-cell apoptosis. Has hemagglutinating activity towards human erythrocytes. In Capra hircus (Goat), this protein is Galectin-1.